Consider the following 770-residue polypeptide: Transferrin receptor protein 1 (770 aa).

At 1–70 (MMDQARSAFS…KPKRCNGFIC (70 aa)) the chain is on the cytoplasmic side. Residues 1 to 70 (MMDQARSAFS…KPKRCNGFIC (70 aa)) are mediates interaction with SH3BP4. Ser10 and Ser19 each carry phosphoserine. Tyr20 is modified (phosphotyrosine). Residues 20–23 (YTRF) carry the Endocytosis signal motif. Thr21 carries the phosphothreonine modification. Position 24 is a phosphoserine (Ser24). The short motif at 61–64 (KPKR) is the Stop-transfer sequence element. 2 S-palmitoyl cysteine lipidation sites follow: Cys65 and Cys70. The helical; Signal-anchor for type II membrane protein transmembrane segment at 71–90 (YGTIAVVLFFLIGFMIGYLG) threads the bilayer. Residues 91 to 770 (YCKRVEPKAG…GDIWDIDNEF (680 aa)) are Extracellular-facing. Residues 102–122 (ERPTGTEALGTERTEPSETEE) form a disordered region. Thr107 carries O-linked (GalNAc...) threonine glycosylation. The PA domain maps to 233 to 323 (SKATTVTGRL…GTGDPYTPGF (91 aa)). 3 N-linked (GlcNAc...) asparagine glycosylation sites follow: Asn261, Asn327, and Asn384. Residues 579 to 770 (TMDLYENLNQ…GDIWDIDNEF (192 aa)) are ligand-binding. Positions 656–658 (RGD) match the Cell attachment site motif. Residues Asn732 and Asn737 are each glycosylated (N-linked (GlcNAc...) asparagine).

It belongs to the peptidase M28 family. M28B subfamily. As to quaternary structure, homodimer; disulfide-linked. Binds one transferrin molecule per subunit. Interacts with SH3BP4. Interacts with STEAP3; facilitates TFRC endocytosis in erythroid precursor cells. Stearoylated by ZDHHC6 which inhibits TFRC-mediated activation of the JNK pathway and promotes mitochondrial fragmentation. Stearoylation does not affect iron uptake. Post-translationally, N- and O-glycosylated, phosphorylated and palmitoylated.

It is found in the cell membrane. The protein localises to the melanosome. Its function is as follows. Cellular uptake of iron occurs via receptor-mediated endocytosis of ligand-occupied transferrin receptor into specialized endosomes. Endosomal acidification leads to iron release. The apotransferrin-receptor complex is then recycled to the cell surface with a return to neutral pH and the concomitant loss of affinity of apotransferrin for its receptor. Transferrin receptor is necessary for development of erythrocytes and the nervous system. Positively regulates T and B cell proliferation through iron uptake. Acts as a lipid sensor that regulates mitochondrial fusion by regulating activation of the JNK pathway. When dietary levels of stearate (C18:0) are low, promotes activation of the JNK pathway, resulting in HUWE1-mediated ubiquitination and subsequent degradation of the mitofusin MFN2 and inhibition of mitochondrial fusion. When dietary levels of stearate (C18:0) are high, TFRC stearoylation inhibits activation of the JNK pathway and thus degradation of the mitofusin MFN2. Mediates uptake of NICOL1 into fibroblasts where it may regulate extracellular matrix production. This chain is Transferrin receptor protein 1 (TFRC), found in Canis lupus familiaris (Dog).